The following is a 151-amino-acid chain: Large ribosomal subunit protein uL23m (151 aa).

Positions 120-143 (DDKKSLEDAKKNHKKFLDKNKDRP) are enriched in basic and acidic residues. Residues 120-151 (DDKKSLEDAKKNHKKFLDKNKDRPGTPGWFSI) are disordered.

This sequence belongs to the universal ribosomal protein uL23 family. Component of the mitochondrial ribosome large subunit (39S) which comprises a 16S rRNA and about 50 distinct proteins.

It is found in the mitochondrion. The sequence is that of Large ribosomal subunit protein uL23m (mRpL23) from Anopheles gambiae (African malaria mosquito).